Reading from the N-terminus, the 359-residue chain is Medium-wave-sensitive opsin 1 (359 aa).

The Extracellular segment spans residues 1–47; the sequence is MAQQLTGEQTLDHYEDSTQASIFTYTNSNSTRGPFEGPNYHIAPRWV. Residues 12-38 are required for 11-cis-retinal regeneration; the sequence is DHYEDSTQASIFTYTNSNSTRGPFEGP. Asparagine 29 carries an N-linked (GlcNAc...) asparagine glycan. A helical membrane pass occupies residues 48 to 72; that stretch reads YHLTSTWMILVVIASVFTNGLVLAA. The Cytoplasmic segment spans residues 73–84; it reads TMRFKKLRHPLN. A helical membrane pass occupies residues 85-110; the sequence is WILVNLAVADLAETIIASTISVVNQI. At 111–124 the chain is on the extracellular side; it reads YGYFVLGHPLCVIE. Cysteine 121 and cysteine 198 are oxidised to a cystine. A helical transmembrane segment spans residues 125–144; that stretch reads GYIVSLCGITGLWSLAIISW. At 145 to 163 the chain is on the cytoplasmic side; the sequence is ERWLVVCKPFGNVRFDAKL. A helical membrane pass occupies residues 164–187; it reads ATVGIVFSWVWAAVWTAPPIFGWS. Topologically, residues 188-213 are extracellular; it reads RYWPYGLKTSCGPDVFSGTSYPGVQS. The helical transmembrane segment at 214-241 threads the bilayer; the sequence is YMMVLMVTCCIFPLSIIVLCYLQVWLAI. Residues 242-263 are Cytoplasmic-facing; it reads RAVAKQQKESESTQKAEKEVTR. A helical transmembrane segment spans residues 264 to 287; the sequence is MVVVMVFAYCLCWGPYTFFACFAT. Topologically, residues 288-295 are extracellular; it reads AHPGYAFH. Residues 296-320 form a helical membrane-spanning segment; it reads PLVASLPSYFAKSATIYNPIIYVFM. Residue lysine 307 is modified to N6-(retinylidene)lysine. The Cytoplasmic portion of the chain corresponds to 321 to 359; the sequence is NRQFRNCILQLFGKKVDDSSELSSTSKTEVSSVSSVSPA.

It belongs to the G-protein coupled receptor 1 family. Opsin subfamily. Monomer. Homodimer. Homotetramer. Post-translationally, O-glycosylated. Phosphorylated on some or all of the serine and threonine residues present in the C-terminal region. Expressed in cone photoreceptor cells.

Its subcellular location is the membrane. Visual pigments are the light-absorbing molecules that mediate vision. They consist of an apoprotein, opsin, covalently linked to cis-retinal. May increase spectral sensitivity in dim light. The chain is Medium-wave-sensitive opsin 1 (Opn1mw) from Rattus norvegicus (Rat).